The sequence spans 264 residues: Undecaprenyl-diphosphatase (264 aa).

The next 8 membrane-spanning stretches (helical) occupy residues G15–F37, A42–W62, Y84–I104, L108–V128, V143–F163, I182–D202, F217–I237, and L243–W263.

Belongs to the UppP family.

The protein resides in the cell inner membrane. It catalyses the reaction di-trans,octa-cis-undecaprenyl diphosphate + H2O = di-trans,octa-cis-undecaprenyl phosphate + phosphate + H(+). Functionally, catalyzes the dephosphorylation of undecaprenyl diphosphate (UPP). Confers resistance to bacitracin. The sequence is that of Undecaprenyl-diphosphatase from Maridesulfovibrio salexigens (strain ATCC 14822 / DSM 2638 / NCIMB 8403 / VKM B-1763) (Desulfovibrio salexigens).